Consider the following 607-residue polypeptide: WD repeat-containing protein 1-A (607 aa).

13 WD repeats span residues 4 to 45 (ELKK…IRNI), 48 to 87 (PAIADIYTEHAHQAVVARYAPSGFYIASGDTSGKLRIWDT), 93 to 135 (LLKY…LWDT), 138 to 176 (SVGEITGNIKVINSVDIKQTRPYRLVTGSDDNCCAFLEG), 180 to 218 (KFKFTMSDHSRFVNCVRFSPDGSKLASAGADGQIFLYDG), 224 to 263 (VCSLGGSKAHDGGIYAVSWSPDGTQLLSASGDKTTKIWDV), 270 to 306 (TTFNLGSDVLDQQLGCLWQKDYLLSVSLSGYINYLDK), 311 to 351 (RPLR…YWDA), 358 to 408 (TFTG…KMDV), 432 to 474 (LKDK…LYSI), 480 to 518 (KDEGKTLPAKGAVTDLAYSHDGAFLAVTDANKVVTVFSV), 523 to 561 (SEKNSYYGHHAKALSVAWSPDNEHFASSGMDMMVYVWTL), and 566 to 604 (TRIKMPDAHRLHHVSSLAWLDEHTLATVSHDACVKQWTV).

The protein belongs to the WD repeat AIP1 family.

It is found in the cell membrane. It localises to the cytoplasm. The protein resides in the cytoskeleton. The protein localises to the nucleus. Induces disassembly of actin filaments in conjunction with ADF/cofilin family proteins. Doesn't sever actin filaments alone, but caps the barbed ends of filaments severed by cofilin, which blocks annealing and depolymerization and allows more extensive severing by cofilin. This chain is WD repeat-containing protein 1-A (wdr1-a), found in Xenopus laevis (African clawed frog).